We begin with the raw amino-acid sequence, 231 residues long: Orotidine 5'-phosphate decarboxylase (231 aa).

Residues D11, K34, 61-70 (DLKLHDIPNT), T117, R179, Q188, G208, and R209 contribute to the substrate site. K63 functions as the Proton donor in the catalytic mechanism.

This sequence belongs to the OMP decarboxylase family. Type 1 subfamily. Homodimer.

It catalyses the reaction orotidine 5'-phosphate + H(+) = UMP + CO2. The protein operates within pyrimidine metabolism; UMP biosynthesis via de novo pathway; UMP from orotate: step 2/2. Its function is as follows. Catalyzes the decarboxylation of orotidine 5'-monophosphate (OMP) to uridine 5'-monophosphate (UMP). The chain is Orotidine 5'-phosphate decarboxylase from Streptococcus suis (strain 98HAH33).